The sequence spans 188 residues: dCTP deaminase (188 aa).

DCTP is bound by residues 111–116 (KSTYAR), 135–137 (TLE), Q156, Y170, and Q180. E137 acts as the Proton donor/acceptor in catalysis.

Belongs to the dCTP deaminase family. Homotrimer.

The enzyme catalyses dCTP + H2O + H(+) = dUTP + NH4(+). It functions in the pathway pyrimidine metabolism; dUMP biosynthesis; dUMP from dCTP (dUTP route): step 1/2. Catalyzes the deamination of dCTP to dUTP. In Pseudomonas aeruginosa (strain UCBPP-PA14), this protein is dCTP deaminase.